Here is a 357-residue protein sequence, read N- to C-terminus: Phenylalanine--tRNA ligase alpha subunit (357 aa).

A Mg(2+)-binding site is contributed by Glu-258.

The protein belongs to the class-II aminoacyl-tRNA synthetase family. Phe-tRNA synthetase alpha subunit type 1 subfamily. As to quaternary structure, tetramer of two alpha and two beta subunits. It depends on Mg(2+) as a cofactor.

It localises to the cytoplasm. It catalyses the reaction tRNA(Phe) + L-phenylalanine + ATP = L-phenylalanyl-tRNA(Phe) + AMP + diphosphate + H(+). The polypeptide is Phenylalanine--tRNA ligase alpha subunit (Caulobacter vibrioides (strain ATCC 19089 / CIP 103742 / CB 15) (Caulobacter crescentus)).